The sequence spans 245 residues: Probable transcriptional regulatory protein MARTH_orf271 (245 aa).

The protein belongs to the TACO1 family.

Its subcellular location is the cytoplasm. This chain is Probable transcriptional regulatory protein MARTH_orf271, found in Metamycoplasma arthritidis (strain 158L3-1) (Mycoplasma arthritidis).